A 355-amino-acid chain; its full sequence is Ferrochelatase (355 aa).

Residues His-214 and Glu-295 each coordinate Fe cation.

The protein belongs to the ferrochelatase family.

The protein resides in the cytoplasm. The catalysed reaction is heme b + 2 H(+) = protoporphyrin IX + Fe(2+). The protein operates within porphyrin-containing compound metabolism; protoheme biosynthesis; protoheme from protoporphyrin-IX: step 1/1. Catalyzes the ferrous insertion into protoporphyrin IX. The chain is Ferrochelatase from Burkholderia thailandensis (strain ATCC 700388 / DSM 13276 / CCUG 48851 / CIP 106301 / E264).